The chain runs to 371 residues: tRNA-specific 2-thiouridylase MnmA (371 aa).

ATP is bound by residues 13–20 and M39; that span reads GMSGGVDS. An interaction with target base in tRNA region spans residues 99–101; it reads NPD. The active-site Nucleophile is the C104. The cysteines at positions 104 and 200 are disulfide-linked. G128 contacts ATP. An interaction with tRNA region spans residues 150–152; that stretch reads KDQ. C200 (cysteine persulfide intermediate) is an active-site residue. An interaction with tRNA region spans residues 308-309; sequence RY.

This sequence belongs to the MnmA/TRMU family.

The protein resides in the cytoplasm. The enzyme catalyses S-sulfanyl-L-cysteinyl-[protein] + uridine(34) in tRNA + AH2 + ATP = 2-thiouridine(34) in tRNA + L-cysteinyl-[protein] + A + AMP + diphosphate + H(+). Catalyzes the 2-thiolation of uridine at the wobble position (U34) of tRNA, leading to the formation of s(2)U34. This Bacillus thuringiensis (strain Al Hakam) protein is tRNA-specific 2-thiouridylase MnmA.